Consider the following 409-residue polypeptide: tRNA(Met) cytidine acetate ligase (409 aa).

ATP contacts are provided by residues 7–20 (VVEY…HLYH), G102, N169, and R194.

This sequence belongs to the TmcAL family.

It localises to the cytoplasm. It carries out the reaction cytidine(34) in elongator tRNA(Met) + acetate + ATP = N(4)-acetylcytidine(34) in elongator tRNA(Met) + AMP + diphosphate. Its function is as follows. Catalyzes the formation of N(4)-acetylcytidine (ac(4)C) at the wobble position of elongator tRNA(Met), using acetate and ATP as substrates. First activates an acetate ion to form acetyladenylate (Ac-AMP) and then transfers the acetyl group to tRNA to form ac(4)C34. This Clostridium botulinum (strain Kyoto / Type A2) protein is tRNA(Met) cytidine acetate ligase.